Reading from the N-terminus, the 193-residue chain is Biphenyl dioxygenase subunit beta (193 aa).

It belongs to the bacterial ring-hydroxylating dioxygenase beta subunit family. In terms of assembly, heterohexamer consisting of 3 BphA1 subunits and 3 BphA2 subunits. A ferredoxin (BphA3) and a ferredoxin reductase (BphA4) must be present to obtain activity.

It carries out the reaction biphenyl + NADH + O2 + H(+) = (2R,3S)-3-phenylcyclohexa-3,5-diene-1,2-diol + NAD(+). It functions in the pathway xenobiotic degradation; biphenyl degradation; 2-hydroxy-2,4-pentadienoate and benzoate from biphenyl: step 1/4. Its function is as follows. The beta subunit may be responsible for the substrate specificity of the enzyme. The sequence is that of Biphenyl dioxygenase subunit beta (bphA2) from Pseudomonas sp. (strain KKS102).